The primary structure comprises 252 residues: tRNA (guanine-N(7)-)-methyltransferase (252 aa).

The S-adenosyl-L-methionine site is built by E80, E105, D132, and D155. Residue D155 is part of the active site. Residues K159, D191, and 231–234 (TKFE) each bind substrate.

The protein belongs to the class I-like SAM-binding methyltransferase superfamily. TrmB family.

The enzyme catalyses guanosine(46) in tRNA + S-adenosyl-L-methionine = N(7)-methylguanosine(46) in tRNA + S-adenosyl-L-homocysteine. The protein operates within tRNA modification; N(7)-methylguanine-tRNA biosynthesis. Functionally, catalyzes the formation of N(7)-methylguanine at position 46 (m7G46) in tRNA. The sequence is that of tRNA (guanine-N(7)-)-methyltransferase from Actinobacillus succinogenes (strain ATCC 55618 / DSM 22257 / CCUG 43843 / 130Z).